The following is a 292-amino-acid chain: Homeobox-leucine zipper protein HOX19 (292 aa).

Disordered stretches follow at residues 14–85, 99–133, and 217–236; these read LALG…HSVS, RERA…RLTK, and FAPP…PPAP. The segment covering 28–74 has biased composition (low complexity); that stretch reads TDAAAAHRGGCRRPSPSSQCPPLEPSLTLSLPDDAAAGAAATATATA. Over residues 99-109 the composition is skewed to basic and acidic residues; sequence RERAEEADGER. Positions 124–183 form a DNA-binding region, homeobox; sequence STRKKLRLTKEQSALLEDRFREHSTLNPKQKVALAKQLNLRPRQVEVWFQNRRARTKLKQ. The tract at residues 182 to 226 is leucine-zipper; the sequence is KQTEVDCEFLKRCCETLTEENRRLQRELQELRALKFAPPPPSSAA.

It belongs to the HD-ZIP homeobox family. Class II subfamily. Expressed in seedlings, roots, stems, leaf sheaths and blades and panicles.

It is found in the nucleus. Functionally, probable transcription factor. In Oryza sativa subsp. japonica (Rice), this protein is Homeobox-leucine zipper protein HOX19 (HOX19).